The primary structure comprises 303 residues: MAAVHDLEMESMNLNMGREMKEELEEEEKMREDGGGKDRAKSKKVHRIVSKWMLPEKSRGTYLERANCFPPPVFIISISLAELAVFIYYAVWKPQKQWITLDTGILESPFIYSPEKREEAWRFISYMLVHAGVQHILGNLCMQLVLGIPLEMVHKGLRVGLVYLAGVIAGSLASSIFDPLRYLVGASGGVYALMGGYFMNVLVNFQEMIPAFGIFRLLIIILIIVLDMGFALYRRFFVPEDGSPVSFAAHIAGGFAGMSIGYTVFSCFDKALLKDPRFWIAIAAYLACVLFAVFFNIFLSPAN.

The tract at residues 20 to 39 (MKEELEEEEKMREDGGGKDR) is disordered. Residues 28-39 (EKMREDGGGKDR) show a composition bias toward basic and acidic residues. The next 7 helical transmembrane spans lie at 72–92 (PVFI…YAVW), 128–148 (LVHA…VLGI), 159–179 (VGLV…IFDP), 183–203 (LVGA…NVLV), 212–232 (FGIF…GFAL), 245–265 (VSFA…YTVF), and 278–298 (FWIA…FNIF). Ser-187 functions as the Nucleophile in the catalytic mechanism. His-250 is a catalytic residue.

The protein belongs to the peptidase S54 family. Post-translationally, proteolytic processing of the proenzyme produces a N-terminal fragment (NTF) and a C-terminal fragment (CTF). The processing is required for activation of the protease.

The protein resides in the cell membrane. It catalyses the reaction Cleaves type-1 transmembrane domains using a catalytic dyad composed of serine and histidine that are contributed by different transmembrane domains.. In terms of biological role, involved in regulated intramembrane proteolysis and the subsequent release of functional polypeptides from their membrane anchors. Known substrate: EFNB3. This chain is Rhomboid-related protein 2 (RHBDL2), found in Homo sapiens (Human).